The following is a 177-amino-acid chain: ATP synthase subunit delta (177 aa).

The protein belongs to the ATPase delta chain family. F-type ATPases have 2 components, F(1) - the catalytic core - and F(0) - the membrane proton channel. F(1) has five subunits: alpha(3), beta(3), gamma(1), delta(1), epsilon(1). F(0) has three main subunits: a(1), b(2) and c(10-14). The alpha and beta chains form an alternating ring which encloses part of the gamma chain. F(1) is attached to F(0) by a central stalk formed by the gamma and epsilon chains, while a peripheral stalk is formed by the delta and b chains.

Its subcellular location is the cell inner membrane. In terms of biological role, f(1)F(0) ATP synthase produces ATP from ADP in the presence of a proton or sodium gradient. F-type ATPases consist of two structural domains, F(1) containing the extramembraneous catalytic core and F(0) containing the membrane proton channel, linked together by a central stalk and a peripheral stalk. During catalysis, ATP synthesis in the catalytic domain of F(1) is coupled via a rotary mechanism of the central stalk subunits to proton translocation. Its function is as follows. This protein is part of the stalk that links CF(0) to CF(1). It either transmits conformational changes from CF(0) to CF(1) or is implicated in proton conduction. The protein is ATP synthase subunit delta of Klebsiella pneumoniae (strain 342).